The following is a 131-amino-acid chain: Large ribosomal subunit protein bL19 (131 aa).

A disordered region spans residues 110 to 131 (KSARIAERTDDRAKKAKATAAE). The span at 113–122 (RIAERTDDRA) shows a compositional bias: basic and acidic residues.

It belongs to the bacterial ribosomal protein bL19 family.

Functionally, this protein is located at the 30S-50S ribosomal subunit interface and may play a role in the structure and function of the aminoacyl-tRNA binding site. The protein is Large ribosomal subunit protein bL19 of Azorhizobium caulinodans (strain ATCC 43989 / DSM 5975 / JCM 20966 / LMG 6465 / NBRC 14845 / NCIMB 13405 / ORS 571).